Consider the following 173-residue polypeptide: Lipoprotein signal peptidase (173 aa).

Helical transmembrane passes span 24–44 (PWLG…IAIL), 55–75 (ITGF…SFLA), 80–100 (WQRW…VWLL), and 105–125 (GQKL…GNVI). Catalysis depends on residues aspartate 135 and aspartate 153. A helical membrane pass occupies residues 145–165 (HWPAFNVADCGICIGAVLLII).

It belongs to the peptidase A8 family.

Its subcellular location is the cell inner membrane. The catalysed reaction is Release of signal peptides from bacterial membrane prolipoproteins. Hydrolyzes -Xaa-Yaa-Zaa-|-(S,diacylglyceryl)Cys-, in which Xaa is hydrophobic (preferably Leu), and Yaa (Ala or Ser) and Zaa (Gly or Ala) have small, neutral side chains.. Its pathway is protein modification; lipoprotein biosynthesis (signal peptide cleavage). This protein specifically catalyzes the removal of signal peptides from prolipoproteins. The protein is Lipoprotein signal peptidase of Ralstonia nicotianae (strain ATCC BAA-1114 / GMI1000) (Ralstonia solanacearum).